A 698-amino-acid polypeptide reads, in one-letter code: MRPVIVKGKHVQVMSSSKREDGEVRSAKTMDRDIVSNAFKQAVLKLNPKQMIKNPIMFVVEIGFFITLLLSVVPSLSTNVPLWFNITVTLVLLFTVFFANFAEALAEGRGKAQADSLKQSKKDVYANIVKENGEITRVLASNLKKGDMVLVKQGEMIPGDGEVIRGLASVDESAITGESAPVMKEAGGDFCSVTGGTMVVSDEITIRITSNPGESFLDKMILLVEGATRQKTPNEIALNTVLISLTLIFLIAVVTLPLFTNYLGFQIDTSILVALLVCLIPTTIGGLLSAIGIAGMDRVTKFNVLAMSGKAVEAAGDINTIILDKTGTITFGNRMAHALLPVGNETIEQLAKWAALSSVLDETPEGRSVMDYVQSKGFSYNVSKEEIGEFVPFKAETRMSGMDLKSGEKVRKGAVGAVIDWVQSQRGKIPTDLHQKADLIAKEGGTPLAVAAGNRIFGLIYLKDTVKPGMRERFEQLRQMGIKTMMCTGDNPLTAATIAKEAGVDEFVAECKPEDKIAVIKAEQELGKLVAMTGDGTNDAPALAQADVGLAMNSGTAAAKEAANMIDLDSNPTKIIEVVAIGKQLLMTRGALTTFSIANDVAKYFAIIPAMFTVAIPQMEALNIMGLHSPLSAILSALIFNALIIPMLIPLAMKGIAYKPMSSNTLLFRNLLIYGFGGVLVPFIGIKLVDLVVGLFIS.

4 helical membrane passes run 56–76 (IMFVVEIGFFITLLLSVVPSL), 82–102 (LWFNITVTLVLLFTVFFANFA), 240–260 (TVLISLTLIFLIAVVTLPLFT), and 271–291 (ILVALLVCLIPTTIGGLLSAI). Residue Asp324 is the 4-aspartylphosphate intermediate of the active site. Residues Asp361, Glu365, 393-400 (FKAETRMS), and Lys412 contribute to the ATP site. Residues Asp535 and Asp539 each coordinate Mg(2+). Helical transmembrane passes span 605–625 (FAIIPAMFTVAIPQMEALNIM), 633–653 (AILSALIFNALIIPMLIPLAM), and 677–697 (GGVLVPFIGIKLVDLVVGLFI).

The protein belongs to the cation transport ATPase (P-type) (TC 3.A.3) family. Type IA subfamily. As to quaternary structure, the system is composed of three essential subunits: KdpA, KdpB and KdpC.

Its subcellular location is the cell membrane. It carries out the reaction K(+)(out) + ATP + H2O = K(+)(in) + ADP + phosphate + H(+). Part of the high-affinity ATP-driven potassium transport (or Kdp) system, which catalyzes the hydrolysis of ATP coupled with the electrogenic transport of potassium into the cytoplasm. This subunit is responsible for energy coupling to the transport system and for the release of the potassium ions to the cytoplasm. This is Potassium-transporting ATPase ATP-binding subunit from Bacillus cytotoxicus (strain DSM 22905 / CIP 110041 / 391-98 / NVH 391-98).